A 660-amino-acid chain; its full sequence is Probable serine/threonine-protein kinase CE0033 (660 aa).

Residues tyrosine 9–leucine 278 form the Protein kinase domain. ATP is bound by residues isoleucine 15–valine 23 and lysine 38. Aspartate 136 acts as the Proton acceptor in catalysis. Positions arginine 288–alanine 319 are disordered. 3 PASTA domains span residues serine 377–serine 443, glycine 444–threonine 512, and glycine 513–asparagine 577.

It belongs to the protein kinase superfamily. Ser/Thr protein kinase family.

It catalyses the reaction L-seryl-[protein] + ATP = O-phospho-L-seryl-[protein] + ADP + H(+). The catalysed reaction is L-threonyl-[protein] + ATP = O-phospho-L-threonyl-[protein] + ADP + H(+). The protein is Probable serine/threonine-protein kinase CE0033 of Corynebacterium efficiens (strain DSM 44549 / YS-314 / AJ 12310 / JCM 11189 / NBRC 100395).